A 977-amino-acid chain; its full sequence is Receptor protein-tyrosine kinase CEPR2 (977 aa).

The signal sequence occupies residues 1–31 (MSRRPDLLRGSVVATVAATFLLFIFPPNVES). Topologically, residues 32–620 (TVEKQALFRF…NVKRNSSLDG (589 aa)) are extracellular. Asn85 carries N-linked (GlcNAc...) asparagine glycosylation. 20 LRR repeats span residues 97 to 121 (LTKL…IVNC), 122 to 146 (KNLK…PLKS), 148 to 167 (EILD…WIGN), 168 to 192 (MNQL…SIGG), 193 to 217 (LKKL…IFDL), 219 to 241 (ALDT…ISRL), 242 to 265 (VNLT…IKNL), 266 to 288 (TRLR…ELGV), 290 to 312 (KELR…GFGD), 313 to 338 (LSHL…GRFS), 340 to 361 (LDTV…LCQN), 363 to 385 (KLQF…YGEC), 386 to 409 (KSLL…FWSL), 411 to 433 (LAKM…IGLS), 434 to 457 (TELS…LGRL), 458 to 481 (TNIE…VGDL), 482 to 504 (KELS…ELKN), 506 to 529 (VKLV…LSQI), 530 to 553 (ASLN…LVKL), and 555 to 576 (LSFI…LLAV). N-linked (GlcNAc...) asparagine glycosylation occurs at Asn128. N-linked (GlcNAc...) asparagine glycosylation occurs at Asn205. Asn243, Asn251, and Asn264 each carry an N-linked (GlcNAc...) asparagine glycan. Residues Asn301 and Asn325 are each glycosylated (N-linked (GlcNAc...) asparagine). 2 N-linked (GlcNAc...) asparagine glycosylation sites follow: Asn469 and Asn491. Asn615 carries an N-linked (GlcNAc...) asparagine glycan. A helical membrane pass occupies residues 621 to 641 (TLLFLALAIVVVVLVSGLFAL). At 642–977 (RYRVVKIREL…SQDTTGKITV (336 aa)) the chain is on the cytoplasmic side. A Protein kinase domain is found at 683–965 (LDEDHVIGSG…RKLDDADPCV (283 aa)). Residues 689 to 697 (IGSGSAGKV) and Lys712 each bind ATP. Position 801 is a phosphotyrosine (Tyr801). The active-site Proton acceptor is the Asp814. Ser846 carries the phosphoserine modification. Phosphotyrosine is present on residues Tyr854 and Tyr861.

It belongs to the protein kinase superfamily. Ser/Thr protein kinase family. As to quaternary structure, interacts with the root-derived peptide CEP1. Binds to the ammonium transporter AMT1-1. In terms of tissue distribution, expressed in mature leaves, primary roots, and the root tips of both primary and lateral roots.

It is found in the cell membrane. The catalysed reaction is L-tyrosyl-[protein] + ATP = O-phospho-L-tyrosyl-[protein] + ADP + H(+). In terms of biological role, receptor kinase involved in the perception of C-terminally encoded plant signaling peptide (CEP) and subsequent regulation of root and shoot development. Together with CEPR1, mediates systemic nitrogen (N)-demand signaling upon the perception of root-derived peptides (e.g. CEP1) via the up-regulation of genes involved in N uptake and assimilation pathways. The chain is Receptor protein-tyrosine kinase CEPR2 from Arabidopsis thaliana (Mouse-ear cress).